We begin with the raw amino-acid sequence, 244 residues long: DNA repair protein RecO (244 aa).

It belongs to the RecO family.

In terms of biological role, involved in DNA repair and RecF pathway recombination. The protein is DNA repair protein RecO of Ehrlichia chaffeensis (strain ATCC CRL-10679 / Arkansas).